The sequence spans 603 residues: Myotubularin (603 aa).

Residues serine 13 and serine 18 each carry the phosphoserine modification. In terms of domain architecture, GRAM spans 29–97 (QDVSETVPRL…GVISRIEKMG (69 aa)). The Myotubularin phosphatase domain occupies 163 to 538 (GWTVYNPVEE…RHLELWVNYY (376 aa)). Residues asparagine 288, asparagine 313, and isoleucine 314 each contribute to the a 1,2-diacyl-sn-glycero-3-phospho-(1D-myo-inositol-3,5-bisphosphate) site. A 1,2-diacyl-sn-glycero-3-phospho-(1D-myo-inositol-3-phosphate)-binding residues include asparagine 288, asparagine 313, and isoleucine 314. Catalysis depends on cysteine 375, which acts as the Phosphocysteine intermediate. Positions 376, 377, 378, 379, 380, 381, 417, and 421 each coordinate a 1,2-diacyl-sn-glycero-3-phospho-(1D-myo-inositol-3,5-bisphosphate). Residues serine 376, aspartate 377, glycine 378, tryptophan 379, aspartate 380, and arginine 381 each coordinate a 1,2-diacyl-sn-glycero-3-phospho-(1D-myo-inositol-3-phosphate). Arginine 421 is an a 1,2-diacyl-sn-glycero-3-phospho-(1D-myo-inositol-3-phosphate) binding site. A Phosphothreonine modification is found at threonine 495. Serine 588 bears the Phosphoserine mark.

It belongs to the protein-tyrosine phosphatase family. Non-receptor class myotubularin subfamily. As to quaternary structure, heterodimer with MTMR12. Interacts with KMT2A/MLL1 (via SET domain). Interacts with DES in skeletal muscle but not in cardiac muscle. Interacts with SPEG. Widely expressed with highest levels detected in heart and muscle and low levels in brain (at protein level). Expressed in skeletal muscles (at protein level).

Its subcellular location is the cytoplasm. The protein resides in the cell membrane. It is found in the cell projection. It localises to the filopodium. The protein localises to the ruffle. Its subcellular location is the late endosome. The protein resides in the myofibril. It is found in the sarcomere. It carries out the reaction a 1,2-diacyl-sn-glycero-3-phospho-(1D-myo-inositol-3-phosphate) + H2O = a 1,2-diacyl-sn-glycero-3-phospho-(1D-myo-inositol) + phosphate. The enzyme catalyses a 1,2-diacyl-sn-glycero-3-phospho-(1D-myo-inositol-3,5-bisphosphate) + H2O = a 1,2-diacyl-sn-glycero-3-phospho-(1D-myo-inositol-5-phosphate) + phosphate. It catalyses the reaction 1,2-dioctanoyl-sn-glycero-3-phospho-(1-D-myo-inositol-3-phosphate) + H2O = 1,2-dioctanoyl-sn-glycero-3-phospho-(1D-myo-inositol) + phosphate. The catalysed reaction is 1,2-dioctanoyl-sn-glycero-3-phospho-(1D-myo-inositol-3,5-bisphosphate) + H2O = 1,2-dioctanoyl-sn-glycero-3-phospho-(1D-myo-inositol-5-phosphate) + phosphate. It carries out the reaction 1,2-dihexadecanoyl-sn-glycero-3-phospho-(1D-myo-inositol-3,5-phosphate) + H2O = 1,2-dihexadecanoyl-sn-glycero-3-phospho-(1D-myo-inositol-5-phosphate) + phosphate. With respect to regulation, allosterically activated by phosphatidylinositol 5-phosphate (PI5P). Its function is as follows. Lipid phosphatase which dephosphorylates phosphatidylinositol 3-monophosphate (PI3P) and phosphatidylinositol 3,5-bisphosphate (PI(3,5)P2). Has also been shown to dephosphorylate phosphotyrosine- and phosphoserine-containing peptides. Negatively regulates EGFR degradation through regulation of EGFR trafficking from the late endosome to the lysosome. Plays a role in vacuolar formation and morphology. Regulates desmin intermediate filament assembly and architecture. Plays a role in mitochondrial morphology and positioning. Required for skeletal muscle maintenance but not for myogenesis. In skeletal muscles, stabilizes MTMR12 protein levels. The protein is Myotubularin of Mus musculus (Mouse).